The chain runs to 395 residues: Innexin inx3 (395 aa).

At 1-37 (MAVFGMVSAVSGFIKIRYLLDKAVIDNMVFRCHYRIT) the chain is on the cytoplasmic side. The helical transmembrane segment at 38–58 (TAILFTCCIIVTANNLIGDPI) threads the bilayer. Over 59-114 (SCINDGAIPMHVINTFCWITYTYTIPGQQHRQIGTDVAGPGLGNEYGQEKRYHSYY) the chain is Extracellular. A helical membrane pass occupies residues 115–135 (QWVPFVLFFQGLMFYVPHWVW). Topologically, residues 136–183 (KNMEDGKIRMITDGLRGMVSVPDDYRRDRQDRILKYFVNSLNTHNGYS) are cytoplasmic. A helical transmembrane segment spans residues 184–204 (FAYFFCELLNFINVIVNIFMV). Residues 205-272 (DKFLGGAFMS…VLALNILNEK (68 aa)) are Extracellular-facing. A helical membrane pass occupies residues 273-293 (IYIFLWFWFIILATISGVAVL). The Cytoplasmic portion of the chain corresponds to 294–395 (YSLVVIMMPT…TFGGGKETET (102 aa)). 2 positions are modified to phosphoserine: S366 and S377. The residue at position 381 (Y381) is a Phosphotyrosine.

This sequence belongs to the pannexin family. In terms of assembly, heterooligomer of Inx2 (via cytoplasmic C-terminal region) and Inx3 (via cytoplasmic C-terminal region). In terms of tissue distribution, in ovary, expressed in nurse cells and follicle cells. Expressed in embryonic epithelial cells. Ubiquitously expressed in stage 5 embryos. Expressed in foregut and hindgut from stage 11-17 and in proventriculus, epidermis and CNS in stage 16 embryos (at protein level). Expressed in anterior and ventral regions in stage 8 embryos. Repeating epidermal pattern emerges at stage 11, refines to one or two cells at each side of the segment borders by stage 13. Expressed in the imaginal wing disk. In pupae, expressed in the CNS and in secondary and tertiary pigment cells of the retina.

It is found in the cell membrane. It localises to the cell junction. The protein localises to the gap junction. The protein resides in the cytoplasm. Its subcellular location is the lateral cell membrane. It is found in the apicolateral cell membrane. Structural components of the gap junctions. Essential for proper epithelial development of the epidermis. The protein is Innexin inx3 (Inx3) of Drosophila melanogaster (Fruit fly).